The sequence spans 179 residues: Large ribosomal subunit protein uL5 (179 aa).

Belongs to the universal ribosomal protein uL5 family. Part of the 50S ribosomal subunit; part of the 5S rRNA/L5/L18/L25 subcomplex. Contacts the 5S rRNA and the P site tRNA. Forms a bridge to the 30S subunit in the 70S ribosome.

This is one of the proteins that bind and probably mediate the attachment of the 5S RNA into the large ribosomal subunit, where it forms part of the central protuberance. In the 70S ribosome it contacts protein S13 of the 30S subunit (bridge B1b), connecting the 2 subunits; this bridge is implicated in subunit movement. Contacts the P site tRNA; the 5S rRNA and some of its associated proteins might help stabilize positioning of ribosome-bound tRNAs. The protein is Large ribosomal subunit protein uL5 of Pseudoalteromonas translucida (strain TAC 125).